We begin with the raw amino-acid sequence, 216 residues long: Transmembrane protein 186 (216 aa).

The Mitochondrial matrix portion of the chain corresponds to 1-68 (MAFLLRVVPR…IYRFRAIRAI (68 aa)). The segment at 31-52 (GDSKRWVGSRSPHSREKSPGTE) is disordered. A helical membrane pass occupies residues 69 to 91 (GFLSRLKLAQTAVTVVALPPGFY). The Mitochondrial intermembrane portion of the chain corresponds to 92–103 (CYSQGLMTLSSL). Residues 104–124 (CLLGGVASFALAMLCWMSHFF) form a helical membrane-spanning segment. The Mitochondrial matrix portion of the chain corresponds to 125–216 (RRLVGILYVN…GTLATLKNSK (92 aa)).

This sequence belongs to the TMEM186 family. As to quaternary structure, part of the mitochondrial complex I assembly/MCIA complex that comprises at least the core subunits TMEM126B, NDUFAF1, ECSIT and ACAD9 and complement subunits such as COA1 and TMEM186. Interacts with MT-ND3.

The protein resides in the mitochondrion inner membrane. As part of the MCIA complex, required for efficient assembly of the mitochondrial complex I. This chain is Transmembrane protein 186, found in Mus musculus (Mouse).